The following is a 137-amino-acid chain: Acidic phospholipase A2 CC-PLA2-1 (137 aa).

A signal peptide spans 1–16; it reads MRTLWIVAVWLMGVEG. Intrachain disulfides connect Cys-42-Cys-130, Cys-44-Cys-60, Cys-59-Cys-110, Cys-65-Cys-137, Cys-66-Cys-103, Cys-73-Cys-96, and Cys-90-Cys-101. Ca(2+) is bound by residues Tyr-43, Gly-45, and Gly-47. His-63 is a catalytic residue. Asp-64 contacts Ca(2+). Residue Asp-104 is part of the active site.

This sequence belongs to the phospholipase A2 family. Group II subfamily. D49 sub-subfamily. It depends on Ca(2+) as a cofactor. Post-translationally, glycosylated (2.5%). In terms of tissue distribution, expressed by the venom gland.

The protein localises to the secreted. It catalyses the reaction a 1,2-diacyl-sn-glycero-3-phosphocholine + H2O = a 1-acyl-sn-glycero-3-phosphocholine + a fatty acid + H(+). Its function is as follows. Snake venom phospholipase A2 (PLA2) that inhibits blood coagulation and platelet aggregation induced by ADP and arachidonic acid. Inhibits tumor cell adhesion and migration in a dose-dependent manner. Abolishes the attachment of human brain microvascular endothelial cells (HBMEC) to fibrinogen (IC(50)=0.12 uM) and dramatically reduces its adhesion to fibronectin (IC(50)=0.12 uM), whereas no effect is observed on type I collagen, vitronectin or laminin 1. Also blocks the cell migration toward fibronectin and fibrinogen. These effects are not dependent of the catalytic activity, but are mediated by alpha-5/beta-1 (ITGA5/ITGB1) and alpha-v-containing (ITGAV) integrins. Also shows anti-angiogenic activity in chicken chorioallantoix membrane assay. Has a relatively high enzymatic activity. PLA2 catalyzes the calcium-dependent hydrolysis of the 2-acyl groups in 3-sn-phosphoglycerides. The protein is Acidic phospholipase A2 CC-PLA2-1 of Cerastes cerastes (Horned desert viper).